The primary structure comprises 351 residues: Anthranilate phosphoribosyltransferase (351 aa).

Residues G80, 83 to 84, T88, 90 to 93, 108 to 116, and S120 each bind 5-phospho-alpha-D-ribose 1-diphosphate; these read GD, NVST, and KHGNRSVTS. G80 is an anthranilate binding site. S92 provides a ligand contact to Mg(2+). N111 is an anthranilate binding site. R166 contacts anthranilate. Mg(2+)-binding residues include D229 and E230.

It belongs to the anthranilate phosphoribosyltransferase family. As to quaternary structure, homodimer. Requires Mg(2+) as cofactor.

It carries out the reaction N-(5-phospho-beta-D-ribosyl)anthranilate + diphosphate = 5-phospho-alpha-D-ribose 1-diphosphate + anthranilate. Its pathway is amino-acid biosynthesis; L-tryptophan biosynthesis; L-tryptophan from chorismate: step 2/5. Functionally, catalyzes the transfer of the phosphoribosyl group of 5-phosphorylribose-1-pyrophosphate (PRPP) to anthranilate to yield N-(5'-phosphoribosyl)-anthranilate (PRA). The sequence is that of Anthranilate phosphoribosyltransferase from Prosthecochloris aestuarii (strain DSM 271 / SK 413).